A 91-amino-acid polypeptide reads, in one-letter code: Small ribosomal subunit protein uS19 (91 aa).

Belongs to the universal ribosomal protein uS19 family.

Its function is as follows. Protein S19 forms a complex with S13 that binds strongly to the 16S ribosomal RNA. This Trichodesmium erythraeum (strain IMS101) protein is Small ribosomal subunit protein uS19.